We begin with the raw amino-acid sequence, 261 residues long: MGNQSFKTLSIDDFLQITGWPDFSKLIKKEHDKVLAVQLPGTFVNFSKPQNSLKNRYNEIPCWDHSRVILIPPSAKYNYDHTDPSHITLTPTEIPSTYIHANFVNGFKEKRKFICCQTPKKNTCEHFWRMVLEQESHIIVSLTKTDKGGFVCHEYWLNAEEGMEIFGRYVIRTLEIIKESSFTKTRLRLTDVCTDASREIHHFWYTDWPDVGNPISPVQILDLILQMNKKRKELTQAAGFKLGPIVVPAPKESVEQEYFVP.

Residues 26–261 (LIKKEHDKVL…ESVEQEYFVP (236 aa)) form the Tyrosine-protein phosphatase domain.

This sequence belongs to the protein-tyrosine phosphatase family.

The polypeptide is Tyrosine phosphatase-like protein H5 (H6) (Microplitis demolitor bracovirus (isolate Webb) (MdBV)).